Consider the following 563-residue polypeptide: Quinidine resistance protein 1 (563 aa).

Residues 1-10 (MTKQQTSVMR) are compositionally biased toward polar residues. The tract at residues 1-50 (MTKQQTSVMRNASIAKEEREGSDNNNVDRSSSDAISDNDAERSNSHSEID) is disordered. Residues 1 to 75 (MTKQQTSVMR…KQKMLLVVQC (75 aa)) are Cytoplasmic-facing. Residues 23 to 33 (DNNNVDRSSSD) show a composition bias toward low complexity. Residues 39-49 (DAERSNSHSEI) show a composition bias toward basic and acidic residues. The chain crosses the membrane as a helical span at residues 76–96 (AFTGFFSTVAGSIYYPVLTII). The Extracellular portion of the chain corresponds to 97–108 (ERKFNITEELAN). A helical membrane pass occupies residues 109–129 (VTIVVYFIFQGVAPSIMGGLA). Over 130-135 (DTFGRR) the chain is Cytoplasmic. Residues 136 to 156 (PIVLWAILAYFCACIGLACAH) traverse the membrane as a helical segment. Topologically, residues 157–165 (NYAQILALR) are extracellular. A helical membrane pass occupies residues 166-186 (CLQAAGISPVIAINSGIMGDV). The Cytoplasmic segment spans residues 187–195 (TTKVERGGY). The helical transmembrane segment at 196–216 (VGLVAGFQVVGTAFGALIGAG) threads the bilayer. Residues 217–224 (LSSKWGWR) are Extracellular-facing. Residues 225 to 245 (AIFWFLAIGSGICLVFSTLLM) form a helical membrane-spanning segment. Residues 246–296 (PETKRTLVGNGSVTPRSFLNRSLILHVGSVKKTLHLDDPDPETLEPRTSVD) lie on the Cytoplasmic side of the membrane. The chain crosses the membrane as a helical span at residues 297–317 (FLAPLKILHIREIDILLSIAG). Topologically, residues 318-341 (LQFSTWTTHQTALTIVLSKKYNLS) are extracellular. The helical transmembrane segment at 342-362 (VAKIGLCFLPAGISTLTSIIS) threads the bilayer. Residues 363–421 (AGRYLNWSYRTRKVKYNRWIKEQELQLMEKYKGDKNKVAELIHSNSHYAFNLVEARLHP) lie on the Cytoplasmic side of the membrane. Residues 422–442 (AFVTLLLSSIGFTAFGWCISV) traverse the membrane as a helical segment. The Extracellular portion of the chain corresponds to 443–445 (KTP). The helical transmembrane segment at 446 to 466 (LAAVLCTSAFASLFSNCILTF) threads the bilayer. The Cytoplasmic segment spans residues 467 to 481 (STTLIVDLFPSKAST). A helical transmembrane segment spans residues 482 to 502 (ATGCLNLFRCLLSAIFIAALT). Residues 503–511 (KMVEKMRYG) lie on the Extracellular side of the membrane. Residues 512–532 (GVFTFLSAITSSSSLLLFYLL) form a helical membrane-spanning segment. The Cytoplasmic portion of the chain corresponds to 533 to 563 (KNGKQLSFDRIRANDKSAGRSVGKNSEKVST).

This sequence belongs to the major facilitator superfamily. CAR1 family.

It localises to the cell membrane. Multidrug resistance transporter involved in resistance and adaptation to quinidine and ketoconazole. The sequence is that of Quinidine resistance protein 1 (QDR1) from Saccharomyces cerevisiae (strain ATCC 204508 / S288c) (Baker's yeast).